The following is a 476-amino-acid chain: Ribulose bisphosphate carboxylase large chain (476 aa).

Positions 124 and 174 each coordinate substrate. The active-site Proton acceptor is Lys-176. Lys-178 serves as a coordination point for substrate. The Mg(2+) site is built by Lys-202, Asp-204, and Glu-205. Lys-202 carries the N6-carboxylysine modification. The active-site Proton acceptor is His-295. Residues Arg-296, His-328, and Ser-380 each contribute to the substrate site.

This sequence belongs to the RuBisCO large chain family. Type I subfamily. As to quaternary structure, heterohexadecamer of 8 large chains and 8 small chains; disulfide-linked. The disulfide link is formed within the large subunit homodimers. Mg(2+) serves as cofactor. Post-translationally, the disulfide bond which can form in the large chain dimeric partners within the hexadecamer appears to be associated with oxidative stress and protein turnover.

The protein localises to the carboxysome. The enzyme catalyses 2 (2R)-3-phosphoglycerate + 2 H(+) = D-ribulose 1,5-bisphosphate + CO2 + H2O. It carries out the reaction D-ribulose 1,5-bisphosphate + O2 = 2-phosphoglycolate + (2R)-3-phosphoglycerate + 2 H(+). In terms of biological role, ruBisCO catalyzes two reactions: the carboxylation of D-ribulose 1,5-bisphosphate, the primary event in carbon dioxide fixation, as well as the oxidative fragmentation of the pentose substrate in the photorespiration process. Both reactions occur simultaneously and in competition at the same active site. The chain is Ribulose bisphosphate carboxylase large chain from Nostoc punctiforme (strain ATCC 29133 / PCC 73102).